Here is a 226-residue protein sequence, read N- to C-terminus: Ribose-5-phosphate isomerase A (226 aa).

Substrate-binding positions include 26–29, 82–85, and 95–98; these read TGST, DGAD, and KGGG. The Proton acceptor role is filled by Glu104. Lys122 contacts substrate.

It belongs to the ribose 5-phosphate isomerase family. Homodimer.

It carries out the reaction aldehydo-D-ribose 5-phosphate = D-ribulose 5-phosphate. It functions in the pathway carbohydrate degradation; pentose phosphate pathway; D-ribose 5-phosphate from D-ribulose 5-phosphate (non-oxidative stage): step 1/1. Its function is as follows. Catalyzes the reversible conversion of ribose-5-phosphate to ribulose 5-phosphate. The protein is Ribose-5-phosphate isomerase A of Streptococcus thermophilus (strain ATCC BAA-250 / LMG 18311).